The sequence spans 1401 residues: MAP kinase kinase kinase wis4 (1401 aa).

Disordered stretches follow at residues 67–99 (HIPLTPSHSGQSEKLMSTRTSHSPYISPTMSYT) and 176–205 (QDSISDKSLPSTNQSLHHSEEDTESDNDFS). Composition is skewed to polar residues over residues 72-99 (PSHSGQSEKLMSTRTSHSPYISPTMSYT) and 176-191 (QDSISDKSLPSTNQSL). In terms of domain architecture, Protein kinase spans 1037–1306 (WQQGHFVRSG…AVDLLTHPWI (270 aa)). ATP is bound by residues 1043-1051 (VRSGMFGDV) and K1066. D1161 serves as the catalytic Proton acceptor.

It belongs to the protein kinase superfamily. STE Ser/Thr protein kinase family. MAP kinase kinase kinase subfamily.

It catalyses the reaction L-seryl-[protein] + ATP = O-phospho-L-seryl-[protein] + ADP + H(+). It carries out the reaction L-threonyl-[protein] + ATP = O-phospho-L-threonyl-[protein] + ADP + H(+). In terms of biological role, involved in a signal transduction pathway that is activated in under conditions of heat shock, oxidative stress or limited nutrition. Unlike win1, it is not activated by changes in the osmolarity of the extracellular environment. Activates the wis1 MAP kinase kinase by phosphorylation. The protein is MAP kinase kinase kinase wis4 (wis4) of Schizosaccharomyces pombe (strain 972 / ATCC 24843) (Fission yeast).